The following is a 150-amino-acid chain: Ribonuclease K6 (150 aa).

The N-terminal stretch at 1–23 is a signal peptide; the sequence is MVLCFPLLLLLLVLWGPVCPLHA. Residue H38 is the Proton acceptor of the active site. Disulfide bonds link C46-C104, C60-C114, C78-C129, and C85-C92. Substrate contacts are provided by residues 61–65 and K86; that span reads KHQNT. N-linked (GlcNAc...) asparagine glycosylation occurs at N100. Residue R105 coordinates substrate. H145 acts as the Proton donor in catalysis.

The protein belongs to the pancreatic ribonuclease family. Interacts (via N-terminus) with bacterial lipopolysaccharide (LPS).

The protein resides in the secreted. It is found in the lysosome. It localises to the cytoplasmic granule. Functionally, ribonuclease which shows a preference for the pyrimidines uridine and cytosine. Has potent antibacterial activity against a range of Gram-positive and Gram-negative bacteria, including P.aeruginosa, A.baumanii, M.luteus, S.aureus, E.faecalis, E.faecium, S.saprophyticus and E.coli. Causes loss of bacterial membrane integrity, and also promotes agglutination of Gram-negative bacteria. Probably contributes to urinary tract sterility. Bactericidal activity is independent of RNase activity. In Pan troglodytes (Chimpanzee), this protein is Ribonuclease K6 (RNASE6).